The chain runs to 878 residues: Serine/threonine-protein kinase D2 (878 aa).

The segment covering 1–12 has biased composition (low complexity); that stretch reads MATAPSYPAGLP. The interval 1–35 is disordered; the sequence is MATAPSYPAGLPGSPGPGSPPPPGGLELQSPPPLL. The span at 14-35 shows a compositional bias: pro residues; sequence SPGPGSPPPPGGLELQSPPPLL. Residue S30 is modified to Phosphoserine. Position 87 is a phosphotyrosine (Y87). A Phorbol-ester/DAG-type 1 zinc finger spans residues 138-188; sequence PHALTVHSYRAPAFCDHCGEMLFGLVRQGLKCDGCGLNYHKRCAFSIPNNC. A phosphoserine mark is found at S197, S198, S200, S203, S206, S212, and S214. The interval 224–247 is disordered; the sequence is RSTTELLPRRPPSSSSSSSASSYT. Residues 236-245 show a composition bias toward low complexity; it reads SSSSSSSASS. Position 244 is a phosphoserine; by CSNK1D and CSNK1E (S244). The Phorbol-ester/DAG-type 2 zinc finger occupies 264–314; the sequence is PHTFLIHSYTRPTVCQACKKLLKGLFRQGLQCKDCKFNCHKRCATRVPNDC. The segment at 343-373 is disordered; sequence ESEDSGVIPGSHSENALHASEEEEGEGGKAQ. The PH domain maps to 397-509; sequence TTLREGWVVH…WETAIRQALM (113 aa). At Y407 the chain carries Phosphotyrosine. Position 438 is a phosphotyrosine; by ABL1 (Y438). S518 is modified (phosphoserine). Residues 551-807 enclose the Protein kinase domain; sequence IFPDEVLGSG…VDKSLSHPWL (257 aa). Residues 557-565 and K580 contribute to the ATP site; that span reads LGSGQFGVV. The active-site Proton acceptor is the D674. S706 is modified (phosphoserine; by PKC). Phosphoserine is present on S710. Y717 is subject to Phosphotyrosine; by ABL1. The Important for ABL1-mediated Tyr-717 phosphorylation signature appears at 724–726; it reads LNQ. The interval 844–869 is disordered; that stretch reads HPLPGSGLPTDRDLGGACPPQDHDMQ. Phosphoserine; by autocatalysis is present on S876.

The protein belongs to the protein kinase superfamily. CAMK Ser/Thr protein kinase family. PKD subfamily. As to quaternary structure, interacts (via C-terminus) with LCK. Interacts (via N-terminal AP-rich region) with CIB1 isoform 2. Interacts (via N-terminus and zing-finger domain 1 and 2) with PRKCD in response to oxidative stress; the interaction is independent of PRKD2 tyrosine phosphorylation. The cofactor is Mg(2+). Post-translationally, phosphorylation of Ser-876 correlates with the activation status of the kinase. Ser-706 or/and Ser-710 are probably phosphorylated by PKC. Phosphorylation at Ser-244 by CSNK1D and CSNK1E promotes nuclear localization and substrate targeting. Phosphorylation at Ser-244, Ser-706 and Ser-710 is required for nuclear localization. Phosphorylated at Tyr-438 by ABL1 in response to oxidative stress. Phosphorylated at Tyr-717 by ABL1 specifically in response to oxidative stress; requires prior phosphorylation at Ser-706 or/and Ser-710. In terms of tissue distribution, widely expressed.

The protein resides in the cytoplasm. The protein localises to the cell membrane. It localises to the nucleus. It is found in the golgi apparatus. Its subcellular location is the trans-Golgi network. The catalysed reaction is L-seryl-[protein] + ATP = O-phospho-L-seryl-[protein] + ADP + H(+). The enzyme catalyses L-threonyl-[protein] + ATP = O-phospho-L-threonyl-[protein] + ADP + H(+). Activated by DAG and phorbol esters. Phorbol-ester/DAG-type domains bind DAG, mediating translocation to membranes. Autophosphorylation of Ser-710 and phosphorylation of Ser-706 by PKC relieves auto-inhibition by the PH domain. Catalytic activity is further increased by phosphorylation at Tyr-717 in response to oxidative stress. Its function is as follows. Serine/threonine-protein kinase that converts transient diacylglycerol (DAG) signals into prolonged physiological effects downstream of PKC, and is involved in the regulation of cell proliferation via MAPK1/3 (ERK1/2) signaling, oxidative stress-induced NF-kappa-B activation, inhibition of HDAC7 transcriptional repression, signaling downstream of T-cell antigen receptor (TCR) and cytokine production, and plays a role in Golgi membrane trafficking, angiogenesis, secretory granule release and cell adhesion. May potentiate mitogenesis induced by the neuropeptide bombesin by mediating an increase in the duration of MAPK1/3 (ERK1/2) signaling, which leads to accumulation of immediate-early gene products including FOS that stimulate cell cycle progression. In response to oxidative stress, is phosphorylated at Tyr-438 and Tyr-717 by ABL1, which leads to the activation of PRKD2 without increasing its catalytic activity, and mediates activation of NF-kappa-B. In response to the activation of the gastrin receptor CCKBR, is phosphorylated at Ser-244 by CSNK1D and CSNK1E, translocates to the nucleus, phosphorylates HDAC7, leading to nuclear export of HDAC7 and inhibition of HDAC7 transcriptional repression of NR4A1/NUR77. Upon TCR stimulation, is activated independently of ZAP70, translocates from the cytoplasm to the nucleus and is required for interleukin-2 (IL2) promoter up-regulation. During adaptive immune responses, is required in peripheral T-lymphocytes for the production of the effector cytokines IL2 and IFNG after TCR engagement and for optimal induction of antibody responses to antigens. In epithelial cells stimulated with lysophosphatidic acid (LPA), is activated through a PKC-dependent pathway and mediates LPA-stimulated interleukin-8 (IL8) secretion via a NF-kappa-B-dependent pathway. During TCR-induced T-cell activation, interacts with and is activated by the tyrosine kinase LCK, which results in the activation of the NFAT transcription factors. In the trans-Golgi network (TGN), regulates the fission of transport vesicles that are on their way to the plasma membrane and in polarized cells is involved in the transport of proteins from the TGN to the basolateral membrane. Plays an important role in endothelial cell proliferation and migration prior to angiogenesis, partly through modulation of the expression of KDR/VEGFR2 and FGFR1, two key growth factor receptors involved in angiogenesis. In secretory pathway, is required for the release of chromogranin-A (CHGA)-containing secretory granules from the TGN. Downstream of PRKCA, plays important roles in angiotensin-2-induced monocyte adhesion to endothelial cells. Plays a regulatory role in angiogenesis and tumor growth by phosphorylating a downstream mediator CIB1 isoform 2, resulting in vascular endothelial growth factor A (VEGFA) secretion. This chain is Serine/threonine-protein kinase D2 (PRKD2), found in Homo sapiens (Human).